A 485-amino-acid chain; its full sequence is MSTTKTTKMTVKTGSKGTSGRVVRVTGPVVDVEFPHGFVPELFNALNAKTTFSSLAKTLTLEVAQHLGDNLVRTISLQPTDGLVRGVEVTDTGNSISVPVGEGVKGHVFNALGYCLDEPGYGDEFEHWSIHRKPPSFEELEPRTEMLETGLKVVDLLTPYVRGGKIALFGGAGVGKTVLIQEMINRIARNFGGTSVFAGVGERTREGNDLWVELQEVNVLKDTALVFGQMDEPPGTRMRVALSALTMAEWFRDEASQDVLLFIDNIFRFTQAGSEVSTLLGRMPSAVGYQPTLADEMGELQERITSTRGRSITSMQAVYVPADDYTDPAPATTFAHLDATTELSRSVFAKGIFPAVDPLASSSTILDPGIVGEEHYRVAQEVIRILQRYKDLQDIIAILGIDELSEEDKQLVNRARRIERFLSQNMMAAEQFTGQPGSTVPVKETIDAFDRLCKGEFDHVPEQAFFLIGGLDDLTKKAESLGAKL.

The tract at residues 1–20 is disordered; the sequence is MSTTKTTKMTVKTGSKGTSG. 170–177 contacts ATP; it reads GGAGVGKT.

The protein belongs to the ATPase alpha/beta chains family. In terms of assembly, F-type ATPases have 2 components, CF(1) - the catalytic core - and CF(0) - the membrane proton channel. CF(1) has five subunits: alpha(3), beta(3), gamma(1), delta(1), epsilon(1). CF(0) has three main subunits: a(1), b(2) and c(9-12). The alpha and beta chains form an alternating ring which encloses part of the gamma chain. CF(1) is attached to CF(0) by a central stalk formed by the gamma and epsilon chains, while a peripheral stalk is formed by the delta and b chains.

The protein localises to the cell membrane. The enzyme catalyses ATP + H2O + 4 H(+)(in) = ADP + phosphate + 5 H(+)(out). Its function is as follows. Produces ATP from ADP in the presence of a proton gradient across the membrane. The catalytic sites are hosted primarily by the beta subunits. This chain is ATP synthase subunit beta, found in Mycobacterium leprae (strain TN).